The following is a 166-amino-acid chain: Ribosome maturation factor RimM (166 aa).

Positions 94–165 (EGEYYLGKLI…TIELKVLDLL (72 aa)) constitute a PRC barrel domain.

This sequence belongs to the RimM family. As to quaternary structure, binds ribosomal protein uS19.

It is found in the cytoplasm. An accessory protein needed during the final step in the assembly of 30S ribosomal subunit, possibly for assembly of the head region. Essential for efficient processing of 16S rRNA. May be needed both before and after RbfA during the maturation of 16S rRNA. It has affinity for free ribosomal 30S subunits but not for 70S ribosomes. The chain is Ribosome maturation factor RimM from Borrelia garinii subsp. bavariensis (strain ATCC BAA-2496 / DSM 23469 / PBi) (Borreliella bavariensis).